The following is a 276-amino-acid chain: ARL14 effector protein (276 aa).

The disordered stretch occupies residues 159-183 (QTEFAPESGKREKRKLTKNASASSD). Lys176 is covalently cross-linked (Glycyl lysine isopeptide (Lys-Gly) (interchain with G-Cter in SUMO2)). A phosphoserine mark is found at Ser182 and Ser266.

As to quaternary structure, interacts with ARL14 and MYO1E.

Its subcellular location is the cytoplasm. Its function is as follows. Through its interaction with ARL14 and MYO1E, may connect MHC class II-containing cytoplasmic vesicles to the actin network and hence controls the movement of these vesicles along the actin cytoskeleton in dendritic cells. This is ARL14 effector protein (Arl14ep) from Rattus norvegicus (Rat).